A 202-amino-acid chain; its full sequence is Secreted RxLR effector protein 11 (202 aa).

The N-terminal stretch at 1 to 23 (MRLNFTKLFAGAVALAWTTESMA) is a signal peptide. Residues 49–61 (RRLRTINGADEER) carry the RxLR-dEER motif.

It belongs to the RxLR effector family.

Its subcellular location is the secreted. The protein localises to the host cytoplasm. It is found in the host nucleus. Functionally, effector that acts as a broad suppressor of cell death to interrupt plant immunity. Inhibits cell death induced by cell death-inducing proteins, including the PAMP elicitor INF1 from P.infestans. This Plasmopara viticola (Downy mildew of grapevine) protein is Secreted RxLR effector protein 11.